Consider the following 551-residue polypeptide: Thermolysin (551 aa).

The N-terminal stretch at 1 to 31 is a signal peptide; that stretch reads MKRKMKMKLVRFGLAAGLAAQVFFLPYNALA. Positions 32–235 are cleaved as a propeptide — activation peptide; that stretch reads STEHVTWNQQ…DAAKPGDVKS (204 aa). Residues Asp292, Asp294, Gln296, and Asp373 each coordinate Ca(2+). His377 is a binding site for Zn(2+). Residue Glu378 is part of the active site. Zn(2+)-binding residues include His381 and Glu401. Residues Glu412, Asn418, Asp420, Glu422, Glu425, Thr429, Ile432, and Asp435 each coordinate Ca(2+). His466 (proton donor) is an active-site residue.

Belongs to the peptidase M4 family. Requires Ca(2+) as cofactor. It depends on Zn(2+) as a cofactor.

Its subcellular location is the secreted. The enzyme catalyses Preferential cleavage: Xaa-|-Leu &gt; Xaa-|-Phe.. Its function is as follows. Extracellular zinc metalloprotease. This is Thermolysin (nprS) from Geobacillus stearothermophilus (Bacillus stearothermophilus).